Reading from the N-terminus, the 77-residue chain is Putative defensin-like protein 162 (77 aa).

The N-terminal stretch at 1-27 is a signal peptide; that stretch reads MAKQLCSYMFISMFILSAFLALPSAEG. 4 disulfide bridges follow: Cys34–Cys77, Cys44–Cys63, Cys49–Cys71, and Cys53–Cys73.

It belongs to the DEFL family.

It is found in the secreted. In Arabidopsis thaliana (Mouse-ear cress), this protein is Putative defensin-like protein 162 (LCR37).